The primary structure comprises 436 residues: 3-ketoacyl-CoA thiolase (436 aa).

The active-site Acyl-thioester intermediate is the C99. Catalysis depends on proton acceptor residues H392 and C422.

It belongs to the thiolase-like superfamily. Thiolase family. In terms of assembly, heterotetramer of two alpha chains (FadJ) and two beta chains (FadI).

The protein resides in the cytoplasm. The enzyme catalyses an acyl-CoA + acetyl-CoA = a 3-oxoacyl-CoA + CoA. The protein operates within lipid metabolism; fatty acid beta-oxidation. Its function is as follows. Catalyzes the final step of fatty acid oxidation in which acetyl-CoA is released and the CoA ester of a fatty acid two carbons shorter is formed. In Photobacterium profundum (strain SS9), this protein is 3-ketoacyl-CoA thiolase.